Reading from the N-terminus, the 95-residue chain is Cell division topological specificity factor (95 aa).

This sequence belongs to the MinE family.

Prevents the cell division inhibition by proteins MinC and MinD at internal division sites while permitting inhibition at polar sites. This ensures cell division at the proper site by restricting the formation of a division septum at the midpoint of the long axis of the cell. The protein is Cell division topological specificity factor of Methylorubrum extorquens (strain CM4 / NCIMB 13688) (Methylobacterium extorquens).